The chain runs to 98 residues: MANFVLNATARNEDKQGKGASRRLRREALVPAIIYGGEAEPVAVTIELRELVKALENNAFFEEVVEVKVGDKVENVKIQALQRHPAKNTPMHADFKRA.

The tract at residues 1–22 is disordered; it reads MANFVLNATARNEDKQGKGASR.

The protein belongs to the bacterial ribosomal protein bL25 family. Part of the 50S ribosomal subunit; part of the 5S rRNA/L5/L18/L25 subcomplex. Contacts the 5S rRNA. Binds to the 5S rRNA independently of L5 and L18.

Functionally, this is one of the proteins that binds to the 5S RNA in the ribosome where it forms part of the central protuberance. The protein is Large ribosomal subunit protein bL25 of Acinetobacter baylyi (strain ATCC 33305 / BD413 / ADP1).